We begin with the raw amino-acid sequence, 258 residues long: Snake venom serine protease 2 (258 aa).

A signal peptide spans 1-18; the sequence is MVLIRVLANLLILQLSYA. A propeptide spanning residues 19–24 is cleaved from the precursor; it reads QKSSEL. Residues 25-249 enclose the Peptidase S1 domain; sequence VFGGRPCNIN…YNDWVQSIIA (225 aa). 6 disulfide bridges follow: Cys-31-Cys-163, Cys-50-Cys-66, Cys-98-Cys-256, Cys-142-Cys-210, Cys-174-Cys-189, and Cys-200-Cys-225. Asn-44 is a glycosylation site (N-linked (GlcNAc...) asparagine). Residues His-65 and Asp-110 each act as charge relay system in the active site. N-linked (GlcNAc...) asparagine glycans are attached at residues Asn-122 and Asn-185. The active-site Charge relay system is the Ser-204.

Belongs to the peptidase S1 family. Snake venom subfamily. As to quaternary structure, monomer. Expressed by the venom gland.

The protein resides in the secreted. With respect to regulation, inhibited by PMSF at 2 mM concentration but not by EDTA. Its function is as follows. Snake venom serine protease that may act in the hemostasis system of the prey. Has weak fibrinogen clotting activity. Possesses amidolysis activity towards S-2251 (substrate for plasmin) but has no hydrolytic activity with S-2302 (plasma kallikrein substrate) or S-2238 (thrombin substrate). This is Snake venom serine protease 2 from Protobothrops jerdonii (Jerdon's pitviper).